Here is an 855-residue protein sequence, read N- to C-terminus: Replication factor C small subunit (855 aa).

In terms of domain architecture, DOD-type homing endonuclease spans 185-308 (WLGYFLGGGY…IAYALAGFGI (124 aa)).

It belongs to the activator 1 small subunits family. RfcS subfamily. In terms of assembly, heteromultimer composed of small subunits (RfcS) and large subunits (RfcL). Post-translationally, this protein undergoes a protein self splicing that involves a post-translational excision of the intervening region (intein) followed by peptide ligation.

Functionally, part of the RFC clamp loader complex which loads the PCNA sliding clamp onto DNA. The protein is Replication factor C small subunit (rfcS) of Pyrococcus horikoshii (strain ATCC 700860 / DSM 12428 / JCM 9974 / NBRC 100139 / OT-3).